Reading from the N-terminus, the 199-residue chain is Imidazoleglycerol-phosphate dehydratase (199 aa).

It belongs to the imidazoleglycerol-phosphate dehydratase family.

Its subcellular location is the cytoplasm. It carries out the reaction D-erythro-1-(imidazol-4-yl)glycerol 3-phosphate = 3-(imidazol-4-yl)-2-oxopropyl phosphate + H2O. Its pathway is amino-acid biosynthesis; L-histidine biosynthesis; L-histidine from 5-phospho-alpha-D-ribose 1-diphosphate: step 6/9. The protein is Imidazoleglycerol-phosphate dehydratase of Kineococcus radiotolerans (strain ATCC BAA-149 / DSM 14245 / SRS30216).